A 137-amino-acid polypeptide reads, in one-letter code: Large ribosomal subunit protein bL17 (137 aa).

Belongs to the bacterial ribosomal protein bL17 family. As to quaternary structure, part of the 50S ribosomal subunit. Contacts protein L32.

The chain is Large ribosomal subunit protein bL17 from Rickettsia typhi (strain ATCC VR-144 / Wilmington).